Reading from the N-terminus, the 591-residue chain is V-type ATP synthase alpha chain (591 aa).

233–240 (GPFGAGKT) serves as a coordination point for ATP.

It belongs to the ATPase alpha/beta chains family.

The enzyme catalyses ATP + H2O + 4 H(+)(in) = ADP + phosphate + 5 H(+)(out). Its function is as follows. Produces ATP from ADP in the presence of a proton gradient across the membrane. The V-type alpha chain is a catalytic subunit. The sequence is that of V-type ATP synthase alpha chain from Streptococcus pyogenes serotype M5 (strain Manfredo).